We begin with the raw amino-acid sequence, 241 residues long: 3-deoxy-D-manno-octulosonic acid kinase (241 aa).

Residue Asp171 is part of the active site.

This sequence belongs to the protein kinase superfamily. KdkA/RfaP family.

It is found in the cell inner membrane. It catalyses the reaction an alpha-Kdo-(2-&gt;6)-lipid IVA + ATP = a 4-O-phospho-alpha-Kdo-(2-&gt;6)-lipid IVA + ADP + H(+). It functions in the pathway bacterial outer membrane biogenesis; LPS core biosynthesis. Its function is as follows. Catalyzes the ATP-dependent phosphorylation of the 3-deoxy-D-manno-octulosonic acid (Kdo) residue in Kdo-lipid IV(A) at the 4-OH position. This is 3-deoxy-D-manno-octulosonic acid kinase from Haemophilus influenzae (strain PittEE).